The chain runs to 650 residues: 1-deoxy-D-xylulose-5-phosphate synthase (650 aa).

The segment covering 1-13 (MSKIKNDKRETGH) has biased composition (basic and acidic residues). The disordered stretch occupies residues 1 to 23 (MSKIKNDKRETGHLKSPPETPLL). Thiamine diphosphate is bound by residues His-92 and 133–135 (AHS). Asp-164 contacts Mg(2+). Thiamine diphosphate is bound by residues 165–166 (GA), Asn-193, Tyr-302, and Glu-384. Asn-193 is a Mg(2+) binding site.

It belongs to the transketolase family. DXPS subfamily. Homodimer. It depends on Mg(2+) as a cofactor. Thiamine diphosphate serves as cofactor.

It carries out the reaction D-glyceraldehyde 3-phosphate + pyruvate + H(+) = 1-deoxy-D-xylulose 5-phosphate + CO2. The protein operates within metabolic intermediate biosynthesis; 1-deoxy-D-xylulose 5-phosphate biosynthesis; 1-deoxy-D-xylulose 5-phosphate from D-glyceraldehyde 3-phosphate and pyruvate: step 1/1. In terms of biological role, catalyzes the acyloin condensation reaction between C atoms 2 and 3 of pyruvate and glyceraldehyde 3-phosphate to yield 1-deoxy-D-xylulose-5-phosphate (DXP). This Chelativorans sp. (strain BNC1) protein is 1-deoxy-D-xylulose-5-phosphate synthase.